The following is a 75-amino-acid chain: Conotoxin ar11a (75 aa).

An N-terminal signal peptide occupies residues 1 to 19; the sequence is MKLCATFLLVLVTLPLVTG. Residues 20–36 constitute a propeptide that is removed on maturation; that stretch reads EKSSERSLSGAILRGVR. Disulfide bonds link C39–C53, C46–C58, C52–C63, and C57–C70.

Expressed by the venom duct.

The protein localises to the secreted. Both natural (L-Leu form) and synthetic (D-Leu from) peptides equally cause sensitivity to touch and body tremor. Neither L-Leu form nor D-Leu form is active on nerve-muscle preparation. The polypeptide is Conotoxin ar11a (Conus arenatus (Sand-dusted cone)).